A 506-amino-acid polypeptide reads, in one-letter code: Zinc finger and SCAN domain containing protein 4C (506 aa).

A disordered region spans residues 1 to 24 (MASQQAPAKDLQTNNLEFTPTDSS). In terms of domain architecture, SCAN box spans 37–119 (SAQLNFSPSN…RFMESLTDEC (83 aa)). C2H2-type zinc fingers lie at residues 395–417 (YKCEECSRMFKHARSLSSHQRTH), 424–446 (LLCVTCQKMFKRVSDRRTHEIIH), 452–474 (FKCSTCEKSFSHKTNLKSHEMIH), and 480–503 (YVCSLCSRRFRQSSTYHRHLRNYH).

Embryonic stem (ES) cell-specific. Expressed in only 5% of ES cells at a given time, but nearly all ES cells express it at least once during 9 passages.

Its subcellular location is the nucleus. The protein resides in the chromosome. The protein localises to the telomere. Its function is as follows. Embryonic stem (ES) cell-specific transcription factor required to regulate ES cell pluripotency. Binds telomeres and plays a key role in genomic stability in ES cells by regulating telomere elongation. Acts as an activator of spontaneous telomere sister chromatid exchange (T-SCE) and telomere elongation in undifferentiated ES cells. In Mus musculus (Mouse), this protein is Zinc finger and SCAN domain containing protein 4C (Zscan4c).